Here is a 1598-residue protein sequence, read N- to C-terminus: Pentafunctional AROM polypeptide (1598 aa).

The interval 1–384 is 3-dehydroquinate synthase; that stretch reads MGVPTKISIL…YEPRACTVSN (384 aa). Residues 44-46, 81-84, 114-116, and D119 each bind NAD(+); these read DTN, ESSK, and GGV. R130 serves as a coordination point for 7-phospho-2-dehydro-3-deoxy-D-arabino-heptonate. 139-140 contributes to the NAD(+) binding site; it reads TT. D146 and K152 together coordinate 7-phospho-2-dehydro-3-deoxy-D-arabino-heptonate. Residue K161 coordinates NAD(+). 7-phospho-2-dehydro-3-deoxy-D-arabino-heptonate is bound at residue N162. NAD(+)-binding positions include 179–182 and N190; that span reads FLNT. E194 provides a ligand contact to Zn(2+). Residues 194-197 and K250 contribute to the 7-phospho-2-dehydro-3-deoxy-D-arabino-heptonate site; that span reads EVIK. E260 functions as the Proton acceptor; for 3-dehydroquinate synthase activity in the catalytic mechanism. 7-phospho-2-dehydro-3-deoxy-D-arabino-heptonate contacts are provided by residues 264–268 and H271; that span reads RNLLN. H271 serves as a coordination point for Zn(2+). H275 functions as the Proton acceptor; for 3-dehydroquinate synthase activity in the catalytic mechanism. Positions 287 and 356 each coordinate 7-phospho-2-dehydro-3-deoxy-D-arabino-heptonate. H287 contributes to the Zn(2+) binding site. The EPSP synthase stretch occupies residues 397-842; it reads VYPGFPKSLN…WDTLAQTFKV (446 aa). C824 functions as the For EPSP synthase activity in the catalytic mechanism. Residues 867–1059 form a shikimate kinase region; sequence AASIFIIGMR…RRKENTFFVS (193 aa). Position 874–881 (874–881) interacts with ATP; it reads GMRGAGKT. The tract at residues 1060–1280 is 3-dehydroquinase; it reads LTFPDLTPAS…AAPGQLSARE (221 aa). H1183 functions as the Proton acceptor; for 3-dehydroquinate dehydratase activity in the catalytic mechanism. The active-site Schiff-base intermediate with substrate; for 3-dehydroquinate dehydratase activity is K1211. Positions 1293–1598 are shikimate dehydrogenase; that stretch reads AKKFAVIGKP…GVSSSDDIIS (306 aa).

In the N-terminal section; belongs to the sugar phosphate cyclases superfamily. Dehydroquinate synthase family. It in the 2nd section; belongs to the EPSP synthase family. This sequence in the 3rd section; belongs to the shikimate kinase family. The protein in the 4th section; belongs to the type-I 3-dehydroquinase family. In the C-terminal section; belongs to the shikimate dehydrogenase family. Homodimer. It depends on Zn(2+) as a cofactor.

The protein localises to the cytoplasm. The enzyme catalyses 7-phospho-2-dehydro-3-deoxy-D-arabino-heptonate = 3-dehydroquinate + phosphate. It catalyses the reaction 3-dehydroquinate = 3-dehydroshikimate + H2O. The catalysed reaction is shikimate + NADP(+) = 3-dehydroshikimate + NADPH + H(+). It carries out the reaction shikimate + ATP = 3-phosphoshikimate + ADP + H(+). The enzyme catalyses 3-phosphoshikimate + phosphoenolpyruvate = 5-O-(1-carboxyvinyl)-3-phosphoshikimate + phosphate. Its pathway is metabolic intermediate biosynthesis; chorismate biosynthesis; chorismate from D-erythrose 4-phosphate and phosphoenolpyruvate: step 2/7. The protein operates within metabolic intermediate biosynthesis; chorismate biosynthesis; chorismate from D-erythrose 4-phosphate and phosphoenolpyruvate: step 3/7. It participates in metabolic intermediate biosynthesis; chorismate biosynthesis; chorismate from D-erythrose 4-phosphate and phosphoenolpyruvate: step 4/7. It functions in the pathway metabolic intermediate biosynthesis; chorismate biosynthesis; chorismate from D-erythrose 4-phosphate and phosphoenolpyruvate: step 5/7. Its pathway is metabolic intermediate biosynthesis; chorismate biosynthesis; chorismate from D-erythrose 4-phosphate and phosphoenolpyruvate: step 6/7. Its function is as follows. The AROM polypeptide catalyzes 5 consecutive enzymatic reactions in prechorismate polyaromatic amino acid biosynthesis. The chain is Pentafunctional AROM polypeptide from Paracoccidioides lutzii (strain ATCC MYA-826 / Pb01) (Paracoccidioides brasiliensis).